A 246-amino-acid polypeptide reads, in one-letter code: ATP synthase subunit b 1 (246 aa).

Residues 5–27 (WFTFTAQVINFLVLVGLLRYFLY) form a helical membrane-spanning segment.

This sequence belongs to the ATPase B chain family. F-type ATPases have 2 components, F(1) - the catalytic core - and F(0) - the membrane proton channel. F(1) has five subunits: alpha(3), beta(3), gamma(1), delta(1), epsilon(1). F(0) has three main subunits: a(1), b(2) and c(10-14). The alpha and beta chains form an alternating ring which encloses part of the gamma chain. F(1) is attached to F(0) by a central stalk formed by the gamma and epsilon chains, while a peripheral stalk is formed by the delta and b chains.

The protein localises to the cell inner membrane. In terms of biological role, f(1)F(0) ATP synthase produces ATP from ADP in the presence of a proton or sodium gradient. F-type ATPases consist of two structural domains, F(1) containing the extramembraneous catalytic core and F(0) containing the membrane proton channel, linked together by a central stalk and a peripheral stalk. During catalysis, ATP synthesis in the catalytic domain of F(1) is coupled via a rotary mechanism of the central stalk subunits to proton translocation. Functionally, component of the F(0) channel, it forms part of the peripheral stalk, linking F(1) to F(0). In Rhodopirellula baltica (strain DSM 10527 / NCIMB 13988 / SH1), this protein is ATP synthase subunit b 1.